The sequence spans 41 residues: Large ribosomal subunit protein bL36 (41 aa).

This sequence belongs to the bacterial ribosomal protein bL36 family.

The protein is Large ribosomal subunit protein bL36 of Xylella fastidiosa (strain M23).